Reading from the N-terminus, the 475-residue chain is Aspartyl/glutamyl-tRNA(Asn/Gln) amidotransferase subunit B (475 aa).

It belongs to the GatB/GatE family. GatB subfamily. In terms of assembly, heterotrimer of A, B and C subunits.

The catalysed reaction is L-glutamyl-tRNA(Gln) + L-glutamine + ATP + H2O = L-glutaminyl-tRNA(Gln) + L-glutamate + ADP + phosphate + H(+). It carries out the reaction L-aspartyl-tRNA(Asn) + L-glutamine + ATP + H2O = L-asparaginyl-tRNA(Asn) + L-glutamate + ADP + phosphate + 2 H(+). In terms of biological role, allows the formation of correctly charged Asn-tRNA(Asn) or Gln-tRNA(Gln) through the transamidation of misacylated Asp-tRNA(Asn) or Glu-tRNA(Gln) in organisms which lack either or both of asparaginyl-tRNA or glutaminyl-tRNA synthetases. The reaction takes place in the presence of glutamine and ATP through an activated phospho-Asp-tRNA(Asn) or phospho-Glu-tRNA(Gln). The protein is Aspartyl/glutamyl-tRNA(Asn/Gln) amidotransferase subunit B of Caldanaerobacter subterraneus subsp. tengcongensis (strain DSM 15242 / JCM 11007 / NBRC 100824 / MB4) (Thermoanaerobacter tengcongensis).